Reading from the N-terminus, the 120-residue chain is MAKKSLMAEPGDPIPRPRKKRYRPGTTALREIRKYQRSTDLLIQRLPFSRIVREISSEFVANFSTDVGLRWQSTALQCLQEAAEAFLVHLFEDTNLCAIHAKRVTIMQRDMQLARRIRGA.

A disordered region spans residues 1–26; the sequence is MAKKSLMAEPGDPIPRPRKKRYRPGT. Residues 14 to 120 are H3-like; the sequence is IPRPRKKRYR…MQLARRIRGA (107 aa).

Belongs to the histone H3 family. In terms of assembly, component of centromeric nucleosomes, where DNA is wrapped around a histone octamer core. The octamer contains two molecules each of H2A, H2B, cnp1/CENPA and H4 assembled in one cnp1-H4 heterotetramer and two H2A-H2B heterodimers. Interacts with the inner kinetochore. Component of centromeric nucleosomes. Interacts with mis6. Interacts with sim4. Ubiquitinated. Is degraded through ubiquitin-mediated proteolysis when not protected by its association to the kinetochore.

It is found in the nucleus. The protein localises to the chromosome. It localises to the centromere. Histone H3-like nucleosomal protein that is specifically found in centromeric nucleosomes. Replaces conventional H3 in the nucleosome core of centromeric chromatin that serves as an assembly site for the inner kinetochore. Required for recruitment and assembly of kinetochore proteins, mitotic progression and chromosome segregation. May serve as an epigenetic mark that propagates centromere identity through replication and cell division. This chain is Histone H3-like centromeric protein cnp1 (cnp1), found in Schizosaccharomyces pombe (strain 972 / ATCC 24843) (Fission yeast).